The primary structure comprises 178 residues: ADP-ribosylation factor-like protein 5 (178 aa).

The N-myristoyl glycine moiety is linked to residue G2. GTP is bound by residues 24–31, 67–71, and 126–129; these read GLDNAGKT, DIGGQ, and NKQD.

This sequence belongs to the small GTPase superfamily. Arf family.

The protein resides in the golgi apparatus. In terms of biological role, GTP-binding protein that may be involved in protein trafficking; may modulate vesicle budding and uncoating within the Golgi apparatus. Plays a role in the shedding of pathogen spores from intestinal cells. This chain is ADP-ribosylation factor-like protein 5 (arl-5), found in Caenorhabditis elegans.